The following is a 144-amino-acid chain: Putative pre-16S rRNA nuclease (144 aa).

The protein belongs to the YqgF nuclease family.

The protein resides in the cytoplasm. In terms of biological role, could be a nuclease involved in processing of the 5'-end of pre-16S rRNA. The chain is Putative pre-16S rRNA nuclease from Wigglesworthia glossinidia brevipalpis.